We begin with the raw amino-acid sequence, 156 residues long: Small ribosomal subunit protein uS7 (156 aa).

This sequence belongs to the universal ribosomal protein uS7 family. In terms of assembly, part of the 30S ribosomal subunit. Contacts proteins S9 and S11.

Its function is as follows. One of the primary rRNA binding proteins, it binds directly to 16S rRNA where it nucleates assembly of the head domain of the 30S subunit. Is located at the subunit interface close to the decoding center, probably blocks exit of the E-site tRNA. The chain is Small ribosomal subunit protein uS7 from Metamycoplasma arthritidis (strain 158L3-1) (Mycoplasma arthritidis).